We begin with the raw amino-acid sequence, 398 residues long: Acetate kinase (398 aa).

Asn-9 contacts Mg(2+). Lys-16 provides a ligand contact to ATP. Substrate is bound at residue Arg-90. Asp-147 (proton donor/acceptor) is an active-site residue. ATP contacts are provided by residues 207-211 (HIGNG), 282-284 (DLR), and 330-334 (GVGEN). Glu-384 is a binding site for Mg(2+).

The protein belongs to the acetokinase family. Homodimer. The cofactor is Mg(2+). Requires Mn(2+) as cofactor.

The protein localises to the cytoplasm. It carries out the reaction acetate + ATP = acetyl phosphate + ADP. It participates in metabolic intermediate biosynthesis; acetyl-CoA biosynthesis; acetyl-CoA from acetate: step 1/2. Its function is as follows. Catalyzes the formation of acetyl phosphate from acetate and ATP. Can also catalyze the reverse reaction. The chain is Acetate kinase from Staphylococcus carnosus (strain TM300).